The following is a 319-amino-acid chain: Coiled-coil domain-containing protein 149 (319 aa).

Coiled-coil stretches lie at residues 1–199 (MANQ…RKNS) and 259–286 (IQHQ…LEVS). The helical transmembrane segment at 298–318 (VSIGFGSMFFLKYLCLWLIAV) threads the bilayer.

This sequence belongs to the CCDC149 family.

It is found in the membrane. This Bos taurus (Bovine) protein is Coiled-coil domain-containing protein 149 (CCDC149).